The following is a 226-amino-acid chain: MAFPSVTSVTVENVTFPPTVKPPCSPNTFFLAGAGVRGLQIHHAFVKFTAICVYLQYDALSFLSVKWKTKSTHQLTESDQFFSDIVTGPFEKFMQVTMIKPLTGQQYSEKVAENCVAIWRSLGIYTDSEAEAIDKFLSVFKDLTFPPGSSILFTVSPNGSLTISFSGDETIPEVTSAVIENKLLSEAVLESMIGKNGVSPAAKQSLASRLSHLFKEPGVCDPQSHK.

Residues Thr-49, Asn-114, and Ser-191 each contribute to the substrate site.

This sequence belongs to the chalcone isomerase family.

It carries out the reaction a chalcone = a flavanone.. Its pathway is secondary metabolite biosynthesis; flavonoid biosynthesis. In terms of biological role, catalyzes the intramolecular cyclization of bicyclic chalcones into tricyclic (S)-flavanones. Responsible for the isomerization of 4,2',4',6'-tetrahydroxychalcone (also termed chalcone) into naringenin. This Glycine max (Soybean) protein is Chalcone--flavanone isomerase 3 (CHI3).